The primary structure comprises 106 residues: Large ribosomal subunit protein bL21 (106 aa).

The protein belongs to the bacterial ribosomal protein bL21 family. In terms of assembly, part of the 50S ribosomal subunit. Contacts protein L20.

Its function is as follows. This protein binds to 23S rRNA in the presence of protein L20. This is Large ribosomal subunit protein bL21 from Chlamydia abortus (strain DSM 27085 / S26/3) (Chlamydophila abortus).